Reading from the N-terminus, the 432-residue chain is Gamma-glutamyl phosphate reductase (432 aa).

This sequence belongs to the gamma-glutamyl phosphate reductase family.

The protein resides in the cytoplasm. It catalyses the reaction L-glutamate 5-semialdehyde + phosphate + NADP(+) = L-glutamyl 5-phosphate + NADPH + H(+). Its pathway is amino-acid biosynthesis; L-proline biosynthesis; L-glutamate 5-semialdehyde from L-glutamate: step 2/2. Its function is as follows. Catalyzes the NADPH-dependent reduction of L-glutamate 5-phosphate into L-glutamate 5-semialdehyde and phosphate. The product spontaneously undergoes cyclization to form 1-pyrroline-5-carboxylate. This chain is Gamma-glutamyl phosphate reductase, found in Deinococcus radiodurans (strain ATCC 13939 / DSM 20539 / JCM 16871 / CCUG 27074 / LMG 4051 / NBRC 15346 / NCIMB 9279 / VKM B-1422 / R1).